We begin with the raw amino-acid sequence, 262 residues long: uncharacterized protein (262 aa).

The helical transmembrane segment at 13 to 35 (VVGALLTVVVIVTAAGIIYVISH) threads the bilayer.

It localises to the membrane. This is an uncharacterized protein from Archaeoglobus fulgidus (strain ATCC 49558 / DSM 4304 / JCM 9628 / NBRC 100126 / VC-16).